Consider the following 261-residue polypeptide: Thiamine thiazole synthase (261 aa).

NAD(+)-binding positions include S33, 52-53, G60, V124, and 152-154; these read ER and HVD. Residues D154 and H169 each coordinate Fe cation. Position 219 (M219) interacts with NAD(+). R229 lines the glycine pocket.

The protein belongs to the THI4 family. In terms of assembly, homooctamer; tetramer of dimers. It depends on Fe(2+) as a cofactor.

It carries out the reaction hydrogen sulfide + glycine + NAD(+) = ADP-5-ethyl-4-methylthiazole-2-carboxylate + nicotinamide + 3 H2O + H(+). Its pathway is cofactor biosynthesis; thiamine diphosphate biosynthesis. Involved in the biosynthesis of the thiazole moiety of thiamine. Catalyzes the conversion of NAD and glycine to adenosine diphosphate 5-(2-hydroxyethyl)-4-methylthiazole-2-carboxylate (ADT), an adenylated thiazole intermediate, using free sulfide as a source of sulfur. This chain is Thiamine thiazole synthase, found in Pyrobaculum arsenaticum (strain DSM 13514 / JCM 11321 / PZ6).